A 78-amino-acid polypeptide reads, in one-letter code: Large ribosomal subunit protein uL30 (78 aa).

Acidic residues predominate over residues 58 to 68; it reads DDTSPDAETGA. Residues 58–78 form a disordered region; it reads DDTSPDAETGADLERDGGNRS. The span at 69–78 shows a compositional bias: basic and acidic residues; that stretch reads DLERDGGNRS.

Belongs to the universal ribosomal protein uL30 family. Part of the 50S ribosomal subunit.

The chain is Large ribosomal subunit protein uL30 from Roseiflexus sp. (strain RS-1).